The following is a 481-amino-acid chain: ATP synthase subunit beta (481 aa).

160–167 (GGAGVGKT) is an ATP binding site.

It belongs to the ATPase alpha/beta chains family. As to quaternary structure, F-type ATPases have 2 components, CF(1) - the catalytic core - and CF(0) - the membrane proton channel. CF(1) has five subunits: alpha(3), beta(3), gamma(1), delta(1), epsilon(1). CF(0) has three main subunits: a(1), b(2) and c(9-12). The alpha and beta chains form an alternating ring which encloses part of the gamma chain. CF(1) is attached to CF(0) by a central stalk formed by the gamma and epsilon chains, while a peripheral stalk is formed by the delta and b chains.

The protein resides in the cell inner membrane. The catalysed reaction is ATP + H2O + 4 H(+)(in) = ADP + phosphate + 5 H(+)(out). Functionally, produces ATP from ADP in the presence of a proton gradient across the membrane. The catalytic sites are hosted primarily by the beta subunits. This is ATP synthase subunit beta from Stigmatella aurantiaca.